Here is a 660-residue protein sequence, read N- to C-terminus: Probable alpha-galactosidase D (660 aa).

A signal peptide spans 1 to 20 (MLLHFILYAALSSVVTSVSL). 3 N-linked (GlcNAc...) asparagine glycosylation sites follow: Asn-47, Asn-91, and Asn-129. The cysteines at positions 124 and 157 are disulfide-linked. Asp-155 serves as the catalytic Nucleophile. N-linked (GlcNAc...) asparagine glycans are attached at residues Asn-182 and Asn-191. 200–204 (EWGIS) provides a ligand contact to substrate. Residue Asp-222 is the Proton donor of the active site. 7 N-linked (GlcNAc...) asparagine glycosylation sites follow: Asn-351, Asn-403, Asn-460, Asn-492, Asn-506, Asn-514, and Asn-584.

It belongs to the glycosyl hydrolase 27 family.

It localises to the secreted. It carries out the reaction Hydrolysis of terminal, non-reducing alpha-D-galactose residues in alpha-D-galactosides, including galactose oligosaccharides, galactomannans and galactolipids.. Functionally, hydrolyzes a variety of simple alpha-D-galactoside as well as more complex molecules such as oligosaccharides and polysaccharides. The chain is Probable alpha-galactosidase D (aglD) from Aspergillus niger (strain ATCC MYA-4892 / CBS 513.88 / FGSC A1513).